Consider the following 170-residue polypeptide: Protein SprT (170 aa).

Positions 19 to 163 (REKLQQANLR…RCLHCGTSLR (145 aa)) constitute a SprT-like domain. H78 lines the Zn(2+) pocket. E79 is a catalytic residue. Position 82 (H82) interacts with Zn(2+).

Belongs to the SprT family. Requires Zn(2+) as cofactor.

It is found in the cytoplasm. This is Protein SprT from Erwinia tasmaniensis (strain DSM 17950 / CFBP 7177 / CIP 109463 / NCPPB 4357 / Et1/99).